The primary structure comprises 382 residues: Ribonuclease D (382 aa).

The 3'-5' exonuclease domain occupies 4-169 (ITTTAELASV…DVFAALDADL (166 aa)). In terms of domain architecture, HRDC spans 208–289 (KPKDLAVMME…QRGLARDPRE (82 aa)).

It belongs to the RNase D family. The cofactor is a divalent metal cation.

The protein localises to the cytoplasm. It catalyses the reaction Exonucleolytic cleavage that removes extra residues from the 3'-terminus of tRNA to produce 5'-mononucleotides.. In terms of biological role, exonuclease involved in the 3' processing of various precursor tRNAs. Initiates hydrolysis at the 3'-terminus of an RNA molecule and releases 5'-mononucleotides. This chain is Ribonuclease D, found in Nitrobacter hamburgensis (strain DSM 10229 / NCIMB 13809 / X14).